The chain runs to 228 residues: Octanoyltransferase (228 aa).

The BPL/LPL catalytic domain maps to 40 to 225; the sequence is GEEAERVWLV…SFERVFDAAP (186 aa). Residues 79–86, 156–158, and 169–171 each bind substrate; these read RGGQWTYH, AIG, and GIA. Cysteine 187 functions as the Acyl-thioester intermediate in the catalytic mechanism.

It belongs to the LipB family.

The protein localises to the cytoplasm. The enzyme catalyses octanoyl-[ACP] + L-lysyl-[protein] = N(6)-octanoyl-L-lysyl-[protein] + holo-[ACP] + H(+). It participates in protein modification; protein lipoylation via endogenous pathway; protein N(6)-(lipoyl)lysine from octanoyl-[acyl-carrier-protein]: step 1/2. Functionally, catalyzes the transfer of endogenously produced octanoic acid from octanoyl-acyl-carrier-protein onto the lipoyl domains of lipoate-dependent enzymes. Lipoyl-ACP can also act as a substrate although octanoyl-ACP is likely to be the physiological substrate. The chain is Octanoyltransferase from Acidiphilium cryptum (strain JF-5).